The sequence spans 162 residues: MSAPRKVRLPSVKAVDMSMEDMAARLARLESENKALKQQVLRGGACASSTSVPSAPVPPPEPLTARQREVMITQATGRLASQAMKKIEDKVRKSVDGVTTRNEMENILQNLTLRIQVSMLGAKGQPSPGEGTRPRESNDPNATRRARSRSRGREAKKVQISD.

Residues 12-43 (VKAVDMSMEDMAARLARLESENKALKQQVLRG) adopt a coiled-coil conformation. A disordered region spans residues 118-162 (SMLGAKGQPSPGEGTRPRESNDPNATRRARSRSRGREAKKVQISD). The span at 151–162 (RGREAKKVQISD) shows a compositional bias: basic and acidic residues.

This sequence belongs to the herpesviridae BLRF2 family. In terms of assembly, homooligomer; homooligomerizes and binds double-stranded DNA (dsDNA) cooperatively. Interacts with host CGAS.

It localises to the virion tegument. It is found in the host cytoplasm. Functionally, plays a role in the inhibition of host innate immune system by targeting the CGAS enzymatic activity which is the principal cytosolic DNA sensor that detects invading viral DNA. Acts by inhibiting CGAS-DNA phase separation: directly binds double-stranded DNA (dsDNA) in a length dependent but sequence independent manner and is able to form DNA-induced phase separation in infected cells. DNA phase separation of ORF52 mediates disruption of liquid-like droplets in which CGAS is activated, thereby preventing CGAS activity. This Homo sapiens (Human) protein is Tegument protein BLRF2.